We begin with the raw amino-acid sequence, 87 residues long: Defensin-A (87 aa).

An N-terminal signal peptide occupies residues 1–19; the sequence is MKFYLVLAFLTLCAVAVTA. Residues 20 to 44 constitute a propeptide that is removed on maturation; sequence LPAGDETRIDLETLEEDLRLVDGAQ. Intrachain disulfides connect cysteine 57/cysteine 78, cysteine 64/cysteine 83, and cysteine 68/cysteine 85.

As to expression, hemolymph and fat body.

The protein resides in the secreted. Antibacterial peptide mostly active against Gram-positive and Gram negative bacteria. This chain is Defensin-A, found in Glossina morsitans morsitans (Savannah tsetse fly).